The sequence spans 104 residues: Large ribosomal subunit protein uL23 (104 aa).

Belongs to the universal ribosomal protein uL23 family. Part of the 50S ribosomal subunit. Contacts protein L29, and trigger factor when it is bound to the ribosome.

One of the early assembly proteins it binds 23S rRNA. One of the proteins that surrounds the polypeptide exit tunnel on the outside of the ribosome. Forms the main docking site for trigger factor binding to the ribosome. This is Large ribosomal subunit protein uL23 from Nostoc sp. (strain PCC 7120 / SAG 25.82 / UTEX 2576).